The sequence spans 557 residues: Dihydroxy-acid dehydratase (557 aa).

A Mg(2+)-binding site is contributed by Asp-78. Position 119 (Cys-119) interacts with [2Fe-2S] cluster. 2 residues coordinate Mg(2+): Asp-120 and Lys-121. Lys-121 is modified (N6-carboxylysine). Cys-192 contributes to the [2Fe-2S] cluster binding site. Residue Glu-442 coordinates Mg(2+). The active-site Proton acceptor is Ser-468.

This sequence belongs to the IlvD/Edd family. In terms of assembly, homodimer. It depends on [2Fe-2S] cluster as a cofactor. Requires Mg(2+) as cofactor.

The catalysed reaction is (2R)-2,3-dihydroxy-3-methylbutanoate = 3-methyl-2-oxobutanoate + H2O. It carries out the reaction (2R,3R)-2,3-dihydroxy-3-methylpentanoate = (S)-3-methyl-2-oxopentanoate + H2O. The protein operates within amino-acid biosynthesis; L-isoleucine biosynthesis; L-isoleucine from 2-oxobutanoate: step 3/4. It functions in the pathway amino-acid biosynthesis; L-valine biosynthesis; L-valine from pyruvate: step 3/4. Functions in the biosynthesis of branched-chain amino acids. Catalyzes the dehydration of (2R,3R)-2,3-dihydroxy-3-methylpentanoate (2,3-dihydroxy-3-methylvalerate) into 2-oxo-3-methylpentanoate (2-oxo-3-methylvalerate) and of (2R)-2,3-dihydroxy-3-methylbutanoate (2,3-dihydroxyisovalerate) into 2-oxo-3-methylbutanoate (2-oxoisovalerate), the penultimate precursor to L-isoleucine and L-valine, respectively. The sequence is that of Dihydroxy-acid dehydratase from Bacillus cereus (strain ZK / E33L).